Reading from the N-terminus, the 238-residue chain is Ribonuclease PH (238 aa).

Phosphate contacts are provided by residues R86 and G124–R126.

This sequence belongs to the RNase PH family. Homohexameric ring arranged as a trimer of dimers.

The enzyme catalyses tRNA(n+1) + phosphate = tRNA(n) + a ribonucleoside 5'-diphosphate. In terms of biological role, phosphorolytic 3'-5' exoribonuclease that plays an important role in tRNA 3'-end maturation. Removes nucleotide residues following the 3'-CCA terminus of tRNAs; can also add nucleotides to the ends of RNA molecules by using nucleoside diphosphates as substrates, but this may not be physiologically important. Probably plays a role in initiation of 16S rRNA degradation (leading to ribosome degradation) during starvation. This chain is Ribonuclease PH, found in Acinetobacter baylyi (strain ATCC 33305 / BD413 / ADP1).